Reading from the N-terminus, the 306-residue chain is UDP-3-O-acyl-N-acetylglucosamine deacetylase (306 aa).

Positions 79, 238, and 242 each coordinate Zn(2+). Catalysis depends on H265, which acts as the Proton donor.

This sequence belongs to the LpxC family. Zn(2+) serves as cofactor.

The enzyme catalyses a UDP-3-O-[(3R)-3-hydroxyacyl]-N-acetyl-alpha-D-glucosamine + H2O = a UDP-3-O-[(3R)-3-hydroxyacyl]-alpha-D-glucosamine + acetate. The protein operates within glycolipid biosynthesis; lipid IV(A) biosynthesis; lipid IV(A) from (3R)-3-hydroxytetradecanoyl-[acyl-carrier-protein] and UDP-N-acetyl-alpha-D-glucosamine: step 2/6. Functionally, catalyzes the hydrolysis of UDP-3-O-myristoyl-N-acetylglucosamine to form UDP-3-O-myristoylglucosamine and acetate, the committed step in lipid A biosynthesis. This chain is UDP-3-O-acyl-N-acetylglucosamine deacetylase, found in Shewanella violacea (strain JCM 10179 / CIP 106290 / LMG 19151 / DSS12).